The sequence spans 327 residues: E3 ubiquitin-protein ligase SINAT4 (327 aa).

The segment at 1-27 (METDSMECVSSTGNEIHQNGNGHQSYQ) is disordered. Residues 8-27 (CVSSTGNEIHQNGNGHQSYQ) show a composition bias toward polar residues. The RING-type zinc-finger motif lies at 64–100 (CPVCTYSMYPPIHQCHNGHTLCSTCKVRVHNRCPTCR). Residues 114–307 (VAESLELPCK…KELKLRVTGK (194 aa)) form an SBD region. Residues 117–177 (SLELPCKFYN…LVAHLRDDHK (61 aa)) form an SIAH-type zinc finger. The Zn(2+) site is built by C122, C129, H141, C145, C152, C159, H171, and H176.

Belongs to the SINA (Seven in absentia) family. In terms of assembly, interacts with SINAT6. Interacts with WAV3. Interacts with FREE1. Interacts with ELC/VPS23A.

The protein resides in the endosome. Its subcellular location is the multivesicular body. It localises to the cytoplasmic vesicle. The protein localises to the autophagosome. The catalysed reaction is S-ubiquitinyl-[E2 ubiquitin-conjugating enzyme]-L-cysteine + [acceptor protein]-L-lysine = [E2 ubiquitin-conjugating enzyme]-L-cysteine + N(6)-ubiquitinyl-[acceptor protein]-L-lysine.. Its pathway is protein modification; protein ubiquitination. In terms of biological role, E3 ubiquitin-protein ligase that mediates ubiquitination and subsequent proteasomal degradation of target proteins. E3 ubiquitin ligases accept ubiquitin from an E2 ubiquitin-conjugating enzyme in the form of a thioester and then directly transfers the ubiquitin to targeted substrates. It probably triggers the ubiquitin-mediated degradation of different substrates. Modulates directly the ubiquitination and proteasomal-dependent degradation of FREE1, a component of the ESCRT-I complex. Modulates directly the ubiquitination and proteasomal-dependent degradation of ELC/VPS23A, a component of the ESCRT-I complex. The chain is E3 ubiquitin-protein ligase SINAT4 from Arabidopsis thaliana (Mouse-ear cress).